The primary structure comprises 170 residues: Crossover junction endodeoxyribonuclease RuvC (170 aa).

Active-site residues include D11, E71, and D143. D11, E71, and D143 together coordinate Mg(2+).

Belongs to the RuvC family. In terms of assembly, homodimer which binds Holliday junction (HJ) DNA. The HJ becomes 2-fold symmetrical on binding to RuvC with unstacked arms; it has a different conformation from HJ DNA in complex with RuvA. In the full resolvosome a probable DNA-RuvA(4)-RuvB(12)-RuvC(2) complex forms which resolves the HJ. Mg(2+) serves as cofactor.

Its subcellular location is the cytoplasm. The enzyme catalyses Endonucleolytic cleavage at a junction such as a reciprocal single-stranded crossover between two homologous DNA duplexes (Holliday junction).. The RuvA-RuvB-RuvC complex processes Holliday junction (HJ) DNA during genetic recombination and DNA repair. Endonuclease that resolves HJ intermediates. Cleaves cruciform DNA by making single-stranded nicks across the HJ at symmetrical positions within the homologous arms, yielding a 5'-phosphate and a 3'-hydroxyl group; requires a central core of homology in the junction. The consensus cleavage sequence is 5'-(A/T)TT(C/G)-3'. Cleavage occurs on the 3'-side of the TT dinucleotide at the point of strand exchange. HJ branch migration catalyzed by RuvA-RuvB allows RuvC to scan DNA until it finds its consensus sequence, where it cleaves and resolves the cruciform DNA. This Sinorhizobium fredii (strain NBRC 101917 / NGR234) protein is Crossover junction endodeoxyribonuclease RuvC.